A 178-amino-acid polypeptide reads, in one-letter code: GTP-dependent dephospho-CoA kinase (178 aa).

GTP-binding residues include aspartate 55, valine 57, aspartate 74, lysine 76, and glutamate 127.

It belongs to the GTP-dependent DPCK family.

The enzyme catalyses 3'-dephospho-CoA + GTP = GDP + CoA + H(+). It participates in cofactor biosynthesis; coenzyme A biosynthesis. Its function is as follows. Catalyzes the GTP-dependent phosphorylation of the 3'-hydroxyl group of dephosphocoenzyme A to form coenzyme A (CoA). This is GTP-dependent dephospho-CoA kinase from Saccharolobus islandicus (strain Y.N.15.51 / Yellowstone #2) (Sulfolobus islandicus).